The sequence spans 251 residues: Imidazole glycerol phosphate synthase subunit HisF (251 aa).

Catalysis depends on residues aspartate 11 and aspartate 130.

The protein belongs to the HisA/HisF family. Heterodimer of HisH and HisF.

It localises to the cytoplasm. The catalysed reaction is 5-[(5-phospho-1-deoxy-D-ribulos-1-ylimino)methylamino]-1-(5-phospho-beta-D-ribosyl)imidazole-4-carboxamide + L-glutamine = D-erythro-1-(imidazol-4-yl)glycerol 3-phosphate + 5-amino-1-(5-phospho-beta-D-ribosyl)imidazole-4-carboxamide + L-glutamate + H(+). Its pathway is amino-acid biosynthesis; L-histidine biosynthesis; L-histidine from 5-phospho-alpha-D-ribose 1-diphosphate: step 5/9. IGPS catalyzes the conversion of PRFAR and glutamine to IGP, AICAR and glutamate. The HisF subunit catalyzes the cyclization activity that produces IGP and AICAR from PRFAR using the ammonia provided by the HisH subunit. The chain is Imidazole glycerol phosphate synthase subunit HisF from Chlorobium chlorochromatii (strain CaD3).